Consider the following 399-residue polypeptide: Integral membrane protein GPR137B (399 aa).

The tract at residues 1–22 is disordered; that stretch reads MRPERPRPRGSAPGPMETPPWD. Residues 1–46 are Lumenal-facing; that stretch reads MRPERPRPRGSAPGPMETPPWDPARNDSLPPTLTPAVPPYVKLGLT. N26 is a glycosylation site (N-linked (GlcNAc...) asparagine). A helical transmembrane segment spans residues 47–67; that stretch reads VVYTVFYALLFVFIYVQLWLV. Residues 68–79 lie on the Cytoplasmic side of the membrane; it reads LRYRHKRLSYQS. A helical transmembrane segment spans residues 80-100; it reads VFLFLCLFWASLRTVLFSFYF. Over 101–111 the chain is Lumenal; sequence KDFVAANSLSP. The chain crosses the membrane as a helical span at residues 112-132; sequence FVFWLLYCFPVCLQFFTLTLM. Over 133–159 the chain is Cytoplasmic; sequence NLYFTQVIFKAKSKYSPELLKYRLPLY. The helical transmembrane segment at 160–180 threads the bilayer; sequence LASLFISLVFLLVNLTCAVLV. Over 181 to 188 the chain is Lumenal; sequence KTGNWERK. A helical transmembrane segment spans residues 189-209; sequence VIVSVRVAINDTLFVLCAVSL. The Cytoplasmic portion of the chain corresponds to 210–237; the sequence is SICLYKISKMSLANIYLESKGSSVCQVT. A helical transmembrane segment spans residues 238-258; sequence AIGVTVILLYTSRACYNLFIL. Residues 259–292 lie on the Lumenal side of the membrane; that stretch reads SFSQNKSVHSFDYDWYNVSDQADLKNQLGDAGYV. 2 N-linked (GlcNAc...) asparagine glycosylation sites follow: N263 and N275. The chain crosses the membrane as a helical span at residues 293–313; sequence LFGVVLFVWELLPTTLVVYFF. Residues 314–399 are Cytoplasmic-facing; the sequence is RVRNPTKDLT…TLDPDKPSLG (86 aa).

Belongs to the GPR137 family. In terms of assembly, interaction with RRAGA; increases RRAGA recruitment to lysosomes. Interacts with MTOR; this interaction is amino acid sensitive. As to expression, expressed in kidney, heart, brain and placenta.

The protein localises to the lysosome membrane. Lysosomal integral membrane protein that regulates the localization and activity of mTORC1, a signaling complex promoting cell growth in response to growth factors, energy levels, and amino acids. Interacts with Rag GTPases and increases the lysosomial localization and activity of Rag GTPases and thereby regulates mTORC1 translocation and activity in lysosome. Involved in the regulation of lysosomal morphology and autophagy. Functionally, also acts as a negative regulator of osteoclast activity. Involved in interleukin-4-induced M2 macrophage polarization. This Homo sapiens (Human) protein is Integral membrane protein GPR137B (GPR137B).